The chain runs to 532 residues: CTP synthase (532 aa).

The segment at 1 to 267 (MTKFIFVTGG…DDIVLKILGL (267 aa)) is amidoligase domain. Residue S13 participates in CTP binding. S13 lines the UTP pocket. 14–19 (SLGKGI) is an ATP binding site. Y54 contacts L-glutamine. D71 provides a ligand contact to ATP. 2 residues coordinate Mg(2+): D71 and E141. Residues 148-150 (DIE), 188-193 (KTKPTQ), and K224 contribute to the CTP site. UTP is bound by residues 188–193 (KTKPTQ) and K224. The 241-residue stretch at 292-532 (EIAIVGKYVE…EFVKATLANR (241 aa)) folds into the Glutamine amidotransferase type-1 domain. Residue G354 participates in L-glutamine binding. Catalysis depends on C381, which acts as the Nucleophile; for glutamine hydrolysis. L-glutamine contacts are provided by residues 382 to 385 (LGMQ), E405, and R462. Catalysis depends on residues H507 and E509.

It belongs to the CTP synthase family. As to quaternary structure, homotetramer.

The enzyme catalyses UTP + L-glutamine + ATP + H2O = CTP + L-glutamate + ADP + phosphate + 2 H(+). It carries out the reaction L-glutamine + H2O = L-glutamate + NH4(+). It catalyses the reaction UTP + NH4(+) + ATP = CTP + ADP + phosphate + 2 H(+). It functions in the pathway pyrimidine metabolism; CTP biosynthesis via de novo pathway; CTP from UDP: step 2/2. Allosterically activated by GTP, when glutamine is the substrate; GTP has no effect on the reaction when ammonia is the substrate. The allosteric effector GTP functions by stabilizing the protein conformation that binds the tetrahedral intermediate(s) formed during glutamine hydrolysis. Inhibited by the product CTP, via allosteric rather than competitive inhibition. In terms of biological role, catalyzes the ATP-dependent amination of UTP to CTP with either L-glutamine or ammonia as the source of nitrogen. Regulates intracellular CTP levels through interactions with the four ribonucleotide triphosphates. The chain is CTP synthase from Desulfitobacterium hafniense (strain Y51).